Here is a 418-residue protein sequence, read N- to C-terminus: MTLLALGINHKTAPVSLRERVTFSPDTLDQALDSLLAQPMVQGGVVLSTCNRTELYLSVEEQDNLQEALIRWLCDYHNLNEDDLRNSLYWHQDNDAVSHLMRVASGLDSLVLGEPQILGQVKKAFADSQKGHLNASALERMFQKSFSVAKRVRTETDIGASAVSVAFAACTLARQIFESLSTVTVLLVGAGETIELVARHLREHKVQKMIIANRTRERAQALTDEVGAEVISLSDIDARLQDADIIISSTASPLPIIGKGMVERALKSRRNQPMLLVDIAVPRDVEPEVGKLANAYLYSVDDLQSIISHNLAQRQAAAVEAETIVEQEASEFMAWLRAQGASETIREYRSQSEQIRDELTTKALSALQQGGDAQAILQDLAWKLTNRLIHAPTKSLQQAARDGDDERLNILRDSLGLE.

Substrate-binding positions include 49-52, S109, 114-116, and Q120; these read TCNR and EPQ. C50 serves as the catalytic Nucleophile. Residue 189 to 194 participates in NADP(+) binding; the sequence is GAGETI.

This sequence belongs to the glutamyl-tRNA reductase family. As to quaternary structure, homodimer.

It carries out the reaction (S)-4-amino-5-oxopentanoate + tRNA(Glu) + NADP(+) = L-glutamyl-tRNA(Glu) + NADPH + H(+). The protein operates within porphyrin-containing compound metabolism; protoporphyrin-IX biosynthesis; 5-aminolevulinate from L-glutamyl-tRNA(Glu): step 1/2. Functionally, catalyzes the NADPH-dependent reduction of glutamyl-tRNA(Glu) to glutamate 1-semialdehyde (GSA). In Salmonella dublin (strain CT_02021853), this protein is Glutamyl-tRNA reductase.